The sequence spans 406 residues: Elongation factor Ts, mitochondrial (406 aa).

Positions 387–406 are disordered; the sequence is ARPSDETSFADQVKEAAGLA.

This sequence belongs to the EF-Ts family.

It is found in the mitochondrion. In terms of biological role, associates with the EF-Tu.GDP complex and induces the exchange of GDP to GTP. It remains bound to the aminoacyl-tRNA.EF-Tu.GTP complex up to the GTP hydrolysis stage on the ribosome. This chain is Elongation factor Ts, mitochondrial, found in Malassezia globosa (strain ATCC MYA-4612 / CBS 7966) (Dandruff-associated fungus).